Reading from the N-terminus, the 441-residue chain is Matrix extracellular phosphoglycoprotein (441 aa).

An N-terminal signal peptide occupies residues methionine 1–alanine 24. N-linked (GlcNAc...) asparagine glycosylation is present at asparagine 82. The tract at residues glutamine 137–aspartate 441 is disordered. The segment covering lysine 142–threonine 156 has biased composition (basic residues). The interval proline 178–histidine 200 is dentonin. Residues arginine 183 to aspartate 185 carry the Cell attachment site motif. O-linked (Xyl...) (chondroitin sulfate) serine glycosylation is present at serine 192. Over residues proline 211–serine 223 the composition is skewed to polar residues. Over residues serine 313–glycine 325 the composition is skewed to basic and acidic residues. 2 stretches are compositionally biased toward polar residues: residues glycine 349–glutamine 358 and glycine 391–arginine 405. Residues arginine 424–aspartate 441 are ASARM motif; interaction with PHEX. Low complexity predominate over residues glutamate 428–aspartate 441.

It belongs to the PF07175/osteoregulin family. As to quaternary structure, interacts (via ASARM motif) with PHEX; the interaction is zinc-dependent. Post-translationally, phosphorylated on serine residues in the ASARM motif; the phosphorylation is important for the inhibition of bone mineralization. In terms of processing, cleaved by CTSB/cathepsin B; the cleavage is blocked by metalloprotease PHEX. Expressed in osteocytes (at protein level). Expressed by chondrocytes, specifically in the hypertrophic zone of the bone growth plate (at protein level). Expressed in osteoblasts in bone (at protein level). Expressed by osteoblasts within the metaphysis (at protein level). Expressed at low levels in white fat, brown fat, testes, brain and aorta. Expressed in the craniofacial complex (at protein level). Expressed in odontoblasts, ameloblasts and in predentin during tooth development (at protein level). Expressed in the kidney (at protein level). Expressed in osteocytes in mandibular condylar cartilage and tibial cartilage (at protein level). Expressed in salivary glands.

Its subcellular location is the secreted. It is found in the extracellular space. It localises to the extracellular matrix. Functionally, regulates renal phosphate and uric acid excretion. Regulates bone mineralization by osteoblasts and cartilage mineralization by chondrocytes. Regulates the mineralization of the extracellular matrix of the craniofacial complex, such as teeth, bone and cartilage. Increases dental pulp stem cell proliferation. The chain is Matrix extracellular phosphoglycoprotein from Mus musculus (Mouse).